The following is a 152-amino-acid chain: Transcriptional regulator MraZ (152 aa).

SpoVT-AbrB domains are found at residues 5-52 (ATLV…PLPE) and 81-124 (ASEC…DETT).

The protein belongs to the MraZ family. Forms oligomers.

The protein localises to the cytoplasm. It localises to the nucleoid. In terms of biological role, negatively regulates its own expression and that of the subsequent genes in the proximal part of the division and cell wall (dcw) gene cluster. Acts by binding directly to DNA. May also regulate the expression of genes outside the dcw cluster. The protein is Transcriptional regulator MraZ of Shigella sonnei (strain Ss046).